A 55-amino-acid chain; its full sequence is Metallothionein-1 (55 aa).

It belongs to the metallothionein superfamily. Type 11 family.

The protein is Metallothionein-1 (MTP1) of Yarrowia lipolytica (strain CLIB 122 / E 150) (Yeast).